Here is a 340-residue protein sequence, read N- to C-terminus: MKALVKRETNKGIWLEQVPVPTPGPNEVLIKLEKTAICGTDLHIYLWDEWSQRTIKPGLTIGHEFVGRVAELGSAVTGYQVGQRVSAEGHIVCGHCRNCRGGRPHLCPNTMGIGVNVNGAFAEYMVMPASNLWPIPDQIPSELAAFFDPYGNAAHCALEFDVIGEDVLITGAGPIGIIAAGICKHIGARNVVVTDVNDFRLKLAADMGATRVVNVSKTSLKDVMADLHMEGFDVGLEMSGNPRAFNDMLDCMYHGGKIAMLGIMPRGAGCDWDKIIFKGLTVQGIYGRKMYETWYKMTQLVLSGFPLHKVLTHQLPIDDFQKGFDLMEAGKAGKVVLSWN.

Cys38 serves as a coordination point for Zn(2+). Residues Thr40 and His43 each act as charge relay system in the active site. Positions 63, 64, 93, 96, 99, and 107 each coordinate Zn(2+). Residues Ile175, Asp195, Arg200, Leu261–Ile263, and Ile285–Tyr286 each bind NAD(+).

Belongs to the zinc-containing alcohol dehydrogenase family. Homotetramer. The cofactor is Zn(2+).

It is found in the cytoplasm. It catalyses the reaction L-threonine + NAD(+) = (2S)-2-amino-3-oxobutanoate + NADH + H(+). It participates in amino-acid degradation; L-threonine degradation via oxydo-reductase pathway; glycine from L-threonine: step 1/2. In terms of biological role, catalyzes the NAD(+)-dependent oxidation of L-threonine to 2-amino-3-ketobutyrate. The chain is L-threonine 3-dehydrogenase from Xanthomonas oryzae pv. oryzae (strain MAFF 311018).